The sequence spans 335 residues: Holliday junction branch migration complex subunit RuvB (335 aa).

The tract at residues Ala4–Tyr184 is large ATPase domain (RuvB-L). Residues Ile23, Arg24, Gly65, Lys68, Thr69, Thr70, Glu131–Tyr133, Arg174, Tyr184, and Arg221 contribute to the ATP site. Thr69 serves as a coordination point for Mg(2+). The segment at Asn185–Asp255 is small ATPAse domain (RuvB-S). The tract at residues Lys258–Asn335 is head domain (RuvB-H). Arg294, Arg313, and Arg318 together coordinate DNA.

Belongs to the RuvB family. As to quaternary structure, homohexamer. Forms an RuvA(8)-RuvB(12)-Holliday junction (HJ) complex. HJ DNA is sandwiched between 2 RuvA tetramers; dsDNA enters through RuvA and exits via RuvB. An RuvB hexamer assembles on each DNA strand where it exits the tetramer. Each RuvB hexamer is contacted by two RuvA subunits (via domain III) on 2 adjacent RuvB subunits; this complex drives branch migration. In the full resolvosome a probable DNA-RuvA(4)-RuvB(12)-RuvC(2) complex forms which resolves the HJ.

The protein localises to the cytoplasm. The enzyme catalyses ATP + H2O = ADP + phosphate + H(+). In terms of biological role, the RuvA-RuvB-RuvC complex processes Holliday junction (HJ) DNA during genetic recombination and DNA repair, while the RuvA-RuvB complex plays an important role in the rescue of blocked DNA replication forks via replication fork reversal (RFR). RuvA specifically binds to HJ cruciform DNA, conferring on it an open structure. The RuvB hexamer acts as an ATP-dependent pump, pulling dsDNA into and through the RuvAB complex. RuvB forms 2 homohexamers on either side of HJ DNA bound by 1 or 2 RuvA tetramers; 4 subunits per hexamer contact DNA at a time. Coordinated motions by a converter formed by DNA-disengaged RuvB subunits stimulates ATP hydrolysis and nucleotide exchange. Immobilization of the converter enables RuvB to convert the ATP-contained energy into a lever motion, pulling 2 nucleotides of DNA out of the RuvA tetramer per ATP hydrolyzed, thus driving DNA branch migration. The RuvB motors rotate together with the DNA substrate, which together with the progressing nucleotide cycle form the mechanistic basis for DNA recombination by continuous HJ branch migration. Branch migration allows RuvC to scan DNA until it finds its consensus sequence, where it cleaves and resolves cruciform DNA. The chain is Holliday junction branch migration complex subunit RuvB from Pseudoalteromonas atlantica (strain T6c / ATCC BAA-1087).